A 356-amino-acid polypeptide reads, in one-letter code: NADH-quinone oxidoreductase subunit H (356 aa).

Helical transmembrane passes span 18–38 (IIMI…IAYI), 87–107 (GVFL…WAVI), 120–140 (VGIL…IMAG), 166–186 (IGFV…SAVV), 205–225 (ILNW…VSAL), 265–285 (AITT…LPPI), 292–312 (WVPG…LIAM), and 333–353 (FLPL…FAGI).

It belongs to the complex I subunit 1 family. NDH-1 is composed of 14 different subunits. Subunits NuoA, H, J, K, L, M, N constitute the membrane sector of the complex.

It is found in the cell inner membrane. It catalyses the reaction a quinone + NADH + 5 H(+)(in) = a quinol + NAD(+) + 4 H(+)(out). Functionally, NDH-1 shuttles electrons from NADH, via FMN and iron-sulfur (Fe-S) centers, to quinones in the respiratory chain. The immediate electron acceptor for the enzyme in this species is believed to be ubiquinone. Couples the redox reaction to proton translocation (for every two electrons transferred, four hydrogen ions are translocated across the cytoplasmic membrane), and thus conserves the redox energy in a proton gradient. This subunit may bind ubiquinone. The polypeptide is NADH-quinone oxidoreductase subunit H (Bradyrhizobium sp. (strain ORS 278)).